Reading from the N-terminus, the 1238-residue chain is DNA-directed RNA polymerase subunit beta (1238 aa).

This sequence belongs to the RNA polymerase beta chain family. In terms of assembly, the RNAP catalytic core consists of 2 alpha, 1 beta, 1 beta' and 1 omega subunit. When a sigma factor is associated with the core the holoenzyme is formed, which can initiate transcription.

The catalysed reaction is RNA(n) + a ribonucleoside 5'-triphosphate = RNA(n+1) + diphosphate. Functionally, DNA-dependent RNA polymerase catalyzes the transcription of DNA into RNA using the four ribonucleoside triphosphates as substrates. The chain is DNA-directed RNA polymerase subunit beta from Clostridioides difficile (strain 630) (Peptoclostridium difficile).